We begin with the raw amino-acid sequence, 343 residues long: NADH-quinone oxidoreductase subunit H (343 aa).

The next 8 membrane-spanning stretches (helical) occupy residues 19–39 (VAWT…GVAY), 89–109 (ALFI…WAVI), 124–144 (LLYV…AGWA), 158–178 (AAQI…VLMA), 198–218 (WYLW…VAET), 257–277 (ILVA…PVAF), 279–299 (PDGI…FLWF), and 314–334 (LGWK…GGMM).

The protein belongs to the complex I subunit 1 family. NDH-1 is composed of 14 different subunits. Subunits NuoA, H, J, K, L, M, N constitute the membrane sector of the complex.

The protein localises to the cell inner membrane. The catalysed reaction is a quinone + NADH + 5 H(+)(in) = a quinol + NAD(+) + 4 H(+)(out). In terms of biological role, NDH-1 shuttles electrons from NADH, via FMN and iron-sulfur (Fe-S) centers, to quinones in the respiratory chain. The immediate electron acceptor for the enzyme in this species is believed to be ubiquinone. Couples the redox reaction to proton translocation (for every two electrons transferred, four hydrogen ions are translocated across the cytoplasmic membrane), and thus conserves the redox energy in a proton gradient. This subunit may bind ubiquinone. This chain is NADH-quinone oxidoreductase subunit H, found in Thiobacillus denitrificans (strain ATCC 25259 / T1).